Consider the following 375-residue polypeptide: 23S rRNA (uracil(747)-C(5))-methyltransferase RlmC (375 aa).

4 residues coordinate [4Fe-4S] cluster: Cys-3, Cys-11, Cys-14, and Cys-87. Residues Gln-212, Phe-241, Glu-262, and Asn-307 each contribute to the S-adenosyl-L-methionine site. Cys-334 acts as the Nucleophile in catalysis.

It belongs to the class I-like SAM-binding methyltransferase superfamily. RNA M5U methyltransferase family. RlmC subfamily.

It catalyses the reaction uridine(747) in 23S rRNA + S-adenosyl-L-methionine = 5-methyluridine(747) in 23S rRNA + S-adenosyl-L-homocysteine + H(+). In terms of biological role, catalyzes the formation of 5-methyl-uridine at position 747 (m5U747) in 23S rRNA. The sequence is that of 23S rRNA (uracil(747)-C(5))-methyltransferase RlmC from Pectobacterium atrosepticum (strain SCRI 1043 / ATCC BAA-672) (Erwinia carotovora subsp. atroseptica).